A 179-amino-acid chain; its full sequence is Acireductone dioxygenase (179 aa).

Residues 1-12 (MVEAWYMDDSEE) show a composition bias toward acidic residues. Residues 1-21 (MVEAWYMDDSEEDQRRPHRLE) are disordered. The Fe(2+) site is built by histidine 88, histidine 90, glutamate 94, and histidine 133. 4 residues coordinate Ni(2+): histidine 88, histidine 90, glutamate 94, and histidine 133.

Belongs to the acireductone dioxygenase (ARD) family. Monomer. Interacts with MMP14. Requires Fe(2+) as cofactor. Ni(2+) is required as a cofactor.

It localises to the cytoplasm. The protein localises to the nucleus. It is found in the cell membrane. The catalysed reaction is 1,2-dihydroxy-5-(methylsulfanyl)pent-1-en-3-one + O2 = 4-methylsulfanyl-2-oxobutanoate + formate + 2 H(+). The enzyme catalyses 1,2-dihydroxy-5-(methylsulfanyl)pent-1-en-3-one + O2 = 3-(methylsulfanyl)propanoate + CO + formate + 2 H(+). The protein operates within amino-acid biosynthesis; L-methionine biosynthesis via salvage pathway; L-methionine from S-methyl-5-thio-alpha-D-ribose 1-phosphate: step 5/6. In terms of biological role, catalyzes 2 different reactions between oxygen and the acireductone 1,2-dihydroxy-3-keto-5-methylthiopentene (DHK-MTPene) depending upon the metal bound in the active site. Fe-containing acireductone dioxygenase (Fe-ARD) produces formate and 2-keto-4-methylthiobutyrate (KMTB), the alpha-ketoacid precursor of methionine in the methionine recycle pathway. Ni-containing acireductone dioxygenase (Ni-ARD) produces methylthiopropionate, carbon monoxide and formate, and does not lie on the methionine recycle pathway. Also down-regulates cell migration mediated by MMP14. The sequence is that of Acireductone dioxygenase from Monodelphis domestica (Gray short-tailed opossum).